A 466-amino-acid polypeptide reads, in one-letter code: Ribosomal protein uS12 methylthiotransferase RimO (466 aa).

An MTTase N-terminal domain is found at 31 to 141; it reads PTIGMVSLGC…VLDAVHGAVP (111 aa). Positions 40, 76, 105, 172, 176, and 179 each coordinate [4Fe-4S] cluster. The Radical SAM core domain maps to 158–397; sequence LTPRHYSYLK…MAKAQAISEA (240 aa). In terms of domain architecture, TRAM spans 400–466; the sequence is AARVGQVIEV…GEYDLWGRLR (67 aa).

It belongs to the methylthiotransferase family. RimO subfamily. The cofactor is [4Fe-4S] cluster.

The protein resides in the cytoplasm. It carries out the reaction L-aspartate(89)-[ribosomal protein uS12]-hydrogen + (sulfur carrier)-SH + AH2 + 2 S-adenosyl-L-methionine = 3-methylsulfanyl-L-aspartate(89)-[ribosomal protein uS12]-hydrogen + (sulfur carrier)-H + 5'-deoxyadenosine + L-methionine + A + S-adenosyl-L-homocysteine + 2 H(+). Catalyzes the methylthiolation of an aspartic acid residue of ribosomal protein uS12. The chain is Ribosomal protein uS12 methylthiotransferase RimO from Ruegeria pomeroyi (strain ATCC 700808 / DSM 15171 / DSS-3) (Silicibacter pomeroyi).